The chain runs to 256 residues: Floral homeotic protein APETALA 1 (256 aa).

The MADS-box domain maps to 1–61 (MGRGRVQLKR…GKLFEYSTDS (61 aa)). The K-box domain occupies 88-178 (NTNWSMEYNR…SKQIKEREKI (91 aa)). Residues 184-206 (EQWDQQNHGHNMPPPPPPQQHQI) are disordered.

As to quaternary structure, homodimer capable of binding to CArG-box sequences.

The protein localises to the nucleus. Its function is as follows. Transcription factor that promotes early floral meristem identity in synergy with LEAFY. Displays a redundant function with CAULIFLOWER in the up-regulation of LEAFY. Required subsequently for the transition of an inflorescence meristem into a floral meristem, and for the normal development of sepals and petals in flowers. Regulates positively B class homeotic proteins. The polypeptide is Floral homeotic protein APETALA 1 (AP1) (Arabidopsis lyrata subsp. lyrata (Lyre-leaved rock-cress)).